Here is a 188-residue protein sequence, read N- to C-terminus: Large ribosomal subunit protein bL35m (188 aa).

Belongs to the bacterial ribosomal protein bL35 family.

The protein resides in the mitochondrion. This chain is Large ribosomal subunit protein bL35m (Mrpl35), found in Mus musculus (Mouse).